Reading from the N-terminus, the 182-residue chain is UPF0398 protein RBAM_020340 (182 aa).

It belongs to the UPF0398 family.

The sequence is that of UPF0398 protein RBAM_020340 from Bacillus velezensis (strain DSM 23117 / BGSC 10A6 / LMG 26770 / FZB42) (Bacillus amyloliquefaciens subsp. plantarum).